Consider the following 189-residue polypeptide: dCTP deaminase (189 aa).

DCTP-binding positions include 112–117, 136–138, Q157, Y171, and Q181; these read KSTYAR and TLE. E138 serves as the catalytic Proton donor/acceptor.

This sequence belongs to the dCTP deaminase family. As to quaternary structure, homotrimer.

The enzyme catalyses dCTP + H2O + H(+) = dUTP + NH4(+). It participates in pyrimidine metabolism; dUMP biosynthesis; dUMP from dCTP (dUTP route): step 1/2. Catalyzes the deamination of dCTP to dUTP. This Methylacidiphilum infernorum (isolate V4) (Methylokorus infernorum (strain V4)) protein is dCTP deaminase.